We begin with the raw amino-acid sequence, 72 residues long: Translation initiation factor IF-1 (72 aa).

The 72-residue stretch at 1-72 (MSKEELIEFE…TKGRITYRFK (72 aa)) folds into the S1-like domain.

The protein belongs to the IF-1 family. Component of the 30S ribosomal translation pre-initiation complex which assembles on the 30S ribosome in the order IF-2 and IF-3, IF-1 and N-formylmethionyl-tRNA(fMet); mRNA recruitment can occur at any time during PIC assembly.

Its subcellular location is the cytoplasm. Functionally, one of the essential components for the initiation of protein synthesis. Stabilizes the binding of IF-2 and IF-3 on the 30S subunit to which N-formylmethionyl-tRNA(fMet) subsequently binds. Helps modulate mRNA selection, yielding the 30S pre-initiation complex (PIC). Upon addition of the 50S ribosomal subunit IF-1, IF-2 and IF-3 are released leaving the mature 70S translation initiation complex. The sequence is that of Translation initiation factor IF-1 from Hyphomonas neptunium (strain ATCC 15444).